Reading from the N-terminus, the 283-residue chain is Pantothenate synthetase (283 aa).

30 to 37 (MGNLHQGH) serves as a coordination point for ATP. The active-site Proton donor is H37. Q61 serves as a coordination point for (R)-pantoate. Q61 contributes to the beta-alanine binding site. 149–152 (GEKD) is an ATP binding site. A (R)-pantoate-binding site is contributed by Q155. Residues V178 and 186–189 (FSSR) each bind ATP.

The protein belongs to the pantothenate synthetase family. In terms of assembly, homodimer.

The protein resides in the cytoplasm. The catalysed reaction is (R)-pantoate + beta-alanine + ATP = (R)-pantothenate + AMP + diphosphate + H(+). It participates in cofactor biosynthesis; (R)-pantothenate biosynthesis; (R)-pantothenate from (R)-pantoate and beta-alanine: step 1/1. In terms of biological role, catalyzes the condensation of pantoate with beta-alanine in an ATP-dependent reaction via a pantoyl-adenylate intermediate. This chain is Pantothenate synthetase, found in Proteus mirabilis (strain HI4320).